Consider the following 488-residue polypeptide: ATP synthase subunit beta (488 aa).

An ATP-binding site is contributed by 164-171 (GGAGMGKT).

Belongs to the ATPase alpha/beta chains family. In terms of assembly, F-type ATPases have 2 components, CF(1) - the catalytic core - and CF(0) - the membrane proton channel. CF(1) has five subunits: alpha(3), beta(3), gamma(1), delta(1), epsilon(1). CF(0) has four main subunits: a(1), b(1), b'(1) and c(9-12).

Its subcellular location is the cellular thylakoid membrane. The enzyme catalyses ATP + H2O + 4 H(+)(in) = ADP + phosphate + 5 H(+)(out). In terms of biological role, produces ATP from ADP in the presence of a proton gradient across the membrane. The catalytic sites are hosted primarily by the beta subunits. The sequence is that of ATP synthase subunit beta from Synechococcus sp. (strain RCC307).